The primary structure comprises 564 residues: Potassium-transporting ATPase potassium-binding subunit (564 aa).

10 helical membrane passes run 4 to 24 (YDYW…PFLG), 67 to 87 (MLAL…ILLF), 135 to 155 (AGLT…LVAL), 179 to 199 (LYGL…QGVP), 254 to 274 (WANL…VFTF), 286 to 306 (AILG…LWAE), 382 to 402 (AGMY…GLMI), 420 to 440 (LLVV…AIAA), 487 to 507 (LMLG…VLAL), and 528 to 548 (GPLF…LTFL).

It belongs to the KdpA family. In terms of assembly, the system is composed of three essential subunits: KdpA, KdpB and KdpC.

The protein localises to the cell inner membrane. Part of the high-affinity ATP-driven potassium transport (or Kdp) system, which catalyzes the hydrolysis of ATP coupled with the electrogenic transport of potassium into the cytoplasm. This subunit binds the periplasmic potassium ions and delivers the ions to the membrane domain of KdpB through an intramembrane tunnel. This Pseudomonas fluorescens (strain SBW25) protein is Potassium-transporting ATPase potassium-binding subunit.